The following is a 165-amino-acid chain: Transcription elongation factor A protein-like 1 (165 aa).

Positions 1–101 are disordered; sequence MENTRSENEE…EQPPCGVGKH (101 aa). A compositionally biased stretch (acidic residues) spans 33-60; the sequence is CSEEDQSSEDLSSEEQSSEEEFFPEELL.

This sequence belongs to the TFS-II family. TFA subfamily.

The protein localises to the nucleus. May be involved in transcriptional regulation. Modulates various viral and cellular promoters in a promoter context-dependent manner. Does not bind DNA directly. This chain is Transcription elongation factor A protein-like 1, found in Mus musculus (Mouse).